Reading from the N-terminus, the 418-residue chain is Tyrosine--tRNA ligase (418 aa).

L-tyrosine is bound at residue tyrosine 34. A 'HIGH' region motif is present at residues 39 to 48 (PTADSLHLGH). L-tyrosine contacts are provided by tyrosine 169 and glutamine 173. The 'KMSKS' region motif lies at 229–233 (KFGKS). Lysine 232 contributes to the ATP binding site. An S4 RNA-binding domain is found at 352-410 (LNIVELLVTSGIVNSKRQAREDVQNGAIYVNGERVQDLDYTLSDSDKIDGELTVIRRGK).

Belongs to the class-I aminoacyl-tRNA synthetase family. TyrS type 1 subfamily. Homodimer.

It localises to the cytoplasm. The enzyme catalyses tRNA(Tyr) + L-tyrosine + ATP = L-tyrosyl-tRNA(Tyr) + AMP + diphosphate + H(+). In terms of biological role, catalyzes the attachment of tyrosine to tRNA(Tyr) in a two-step reaction: tyrosine is first activated by ATP to form Tyr-AMP and then transferred to the acceptor end of tRNA(Tyr). This chain is Tyrosine--tRNA ligase, found in Streptococcus suis (strain 98HAH33).